A 554-amino-acid chain; its full sequence is MLLRSPSYAGKAAQAQEGDAYGVYQLATLLIGMDAEDETSCLLAADALYRLGRLDDAHKSLLVALSQRPQAAPVLVRLALLQLRRGFCYDANQLVKKVAQSGDTACLQHMLDIFHHEDLQLLQDHCHTRALSILRARPGGSDSEAHTREAIAYLSLAIFAAGSGGSESLLVRARCYGLLGQKKTAMFDFNAILREEPGNVKALCGRALVHLALDQLQEAVDDMVSALKLDPGTVIPEILSLKTEVQLPLTQGLYTRCRVLLNQCLHTGVPLREEDTQGLLAMGKALIRINATQPSWRLLLTDILTGLGKYQEAGTHLQEALHLTPSSEAAQARQGLLQLKKGDVSAAVHGLQCLAERDTQDLGFLLCLLDSPERQSLVQTAAKEASNILDLGNPGQALSYCSLAILAGGNNPYHLRLRVACLTQLQEYDRALRDLDRVLQHPAEDSDLPRQSEDFCTRGRLLLSLGDKDGAAGAFTQALALAPAQAQNSLLEQPGQAMTASVFLIHGQRCLEEEHFEEAWTAVQNGLLVDPSHSGLKKLKLRTRKVATSGCRLH.

TPR repeat units lie at residues 38–71, 166–199, 200–233, 294–327, 328–361, 411–445, 452–485, and 500–533; these read ETSC…RPQA, SESL…EPGN, VKAL…DPGT, PSWR…TPSS, EAAQ…DTQD, NPYH…PAED, SEDF…APAQ, and ASVF…DPSH.

The sequence is that of Tetratricopeptide repeat protein 34 (Ttc34) from Mus musculus (Mouse).